A 182-amino-acid chain; its full sequence is Ribulose bisphosphate carboxylase small subunit, chloroplastic (182 aa).

The transit peptide at 1 to 58 (MACSMISSATVAAVSRASPAQSSMVAPFTCLKSTSAFPVTQKTNNDITSIASNGGRVQ) directs the protein to the chloroplast.

The protein belongs to the RuBisCO small chain family. In terms of assembly, heterohexadecamer of 8 large and 8 small subunits.

It is found in the plastid. Its subcellular location is the chloroplast. RuBisCO catalyzes two reactions: the carboxylation of D-ribulose 1,5-bisphosphate, the primary event in carbon dioxide fixation, as well as the oxidative fragmentation of the pentose substrate. Both reactions occur simultaneously and in competition at the same active site. Although the small subunit is not catalytic it is essential for maximal activity. The protein is Ribulose bisphosphate carboxylase small subunit, chloroplastic of Betula pendula (European white birch).